Here is a 76-residue protein sequence, read N- to C-terminus: ATP synthase subunit 9, mitochondrial (76 aa).

Met1 is subject to N-formylmethionine. Transmembrane regions (helical) follow at residues 14-34 and 52-72; these read IATIGLTGAGIGIAIVFAALI and ILGFALSEATGLFCLMISFLL.

In terms of assembly, F-type ATP synthases have 2 components, the catalytic core F(1) and the membrane-embedded component F(0), linked together by a central stalk and a peripheral stalk. The central stalk, also called rotor shaft, is often seen as part of F(1). The peripheral stalk is seen as part of F(0). F(0) contains the membrane channel next to the rotor. F-type ATP synthases form dimers but each monomer functions independently in ATP generation. The dimer consists of 18 different polypeptides: ATP1 (subunit alpha, part of F(1), 3 molecules per monomer), ATP2 (subunit beta, part of F(1), 3 molecules per monomer), ATP3 (subunit gamma, part of the central stalk), ATP4 (subunit b, part of the peripheral stalk), ATP5/OSCP (subunit 5/OSCP, part of the peripheral stalk), ATP6 (subunit a, part of the peripheral stalk), ATP7 (subunit d, part of the peripheral stalk), ATP8 (subunit 8, part of the peripheral stalk), OLI1 (subunit c, part of the rotor, 10 molecules per monomer), ATP14 (subunit h, part of the peripheral stalk), ATP15 (subunit epsilon, part of the central stalk), ATP16 (subunit delta, part of the central stalk), ATP17 (subunit f, part of the peripheral stalk), ATP18 (subunit i/j, part of the peripheral stalk). Dimer-specific subunits are ATP19 (subunit k, at interface between monomers), ATP20 (subunit g, at interface between monomers), TIM11 (subunit e, at interface between monomers). Also contains subunit L.

It localises to the mitochondrion inner membrane. In terms of biological role, mitochondrial membrane ATP synthase (F(1)F(0) ATP synthase or Complex V) produces ATP from ADP in the presence of a proton gradient across the membrane which is generated by electron transport complexes of the respiratory chain. F-type ATP synthases consist of two structural domains, F(1) - containing the extramembraneous catalytic core, and F(0) - containing the membrane proton channel, linked together by a central stalk and a peripheral stalk. During catalysis, ATP synthesis in the catalytic domain of F(1) is coupled via a rotary mechanism of the central stalk subunits to proton translocation. Part of the complex F(0) domain. A homomeric c-ring of 10 OLI1/ATP9 subunits is part of the complex rotary element. The protein is ATP synthase subunit 9, mitochondrial of Pichia angusta (Yeast).